A 51-amino-acid chain; its full sequence is Insulin (51 aa).

3 disulfides stabilise this stretch: Cys8/Cys37, Cys20/Cys50, and Cys36/Cys41.

It belongs to the insulin family. Heterodimer of a B chain and an A chain linked by two disulfide bonds.

Its subcellular location is the secreted. Its function is as follows. Insulin decreases blood glucose concentration. It increases cell permeability to monosaccharides, amino acids and fatty acids. It accelerates glycolysis, the pentose phosphate cycle, and glycogen synthesis in liver. This Platichthys flesus (European flounder) protein is Insulin (ins).